Consider the following 142-residue polypeptide: UPF0102 protein Synpcc7942_0312 (142 aa).

It belongs to the UPF0102 family.

This Synechococcus elongatus (strain ATCC 33912 / PCC 7942 / FACHB-805) (Anacystis nidulans R2) protein is UPF0102 protein Synpcc7942_0312.